A 569-amino-acid polypeptide reads, in one-letter code: Cationic amino acid transporter 5 (569 aa).

Over 1-67 (MEGEERGYWR…KQSEHEMKRC (67 aa)) the chain is Cytoplasmic. Residues 68-88 (LTWWDLVWFGFGSVIGAGIFV) traverse the membrane as a helical segment. Residues 89–97 (LTGQEAHEQ) are Extracellular-facing. A helical membrane pass occupies residues 98–118 (AGPAIVLSYVVSGLSAMLSVF). The Cytoplasmic segment spans residues 119–143 (CYTEFAVEIPVAGGSFAYLRIELGD). Residues 144-164 (FAAFITAGNILLESIVGTAAV) traverse the membrane as a helical segment. At 165 to 192 (ARAWTSYFATLLNRSPNALRIKTDLSSG) the chain is on the extracellular side. Residues 193 to 213 (FNLLDPIAVVVIAASATIASI) form a helical membrane-spanning segment. Residues 214-222 (STRKTSLLN) are Cytoplasmic-facing. A helical membrane pass occupies residues 223–243 (WIASAINTLVIFFVIIAGFIH). At 244–251 (ADTSNLTP) the chain is on the extracellular side. Residues 252 to 272 (FLPFGPEGVFRAAAVVYFAYG) traverse the membrane as a helical segment. Residues 273 to 290 (GFDSIATMAEETKNPSRD) lie on the Cytoplasmic side of the membrane. A helical transmembrane segment spans residues 291–311 (IPIGLLGSMSIITVIYCLMAL). The Extracellular segment spans residues 312-341 (SLSMMQKYTDIDPNAAYSVAFQSVGMKWGK). Residues 342 to 362 (YLVALGALKGMTTVLLVGALG) form a helical membrane-spanning segment. At 363–389 (QARYVTHIARTHMIPPIFALVHPKTGT) the chain is on the cytoplasmic side. Residues 390 to 410 (PINANLLVAIPSALIAFFSGL) traverse the membrane as a helical segment. Aspartate 411 is a topological domain (extracellular). The helical transmembrane segment at 412 to 432 (VLASLLSISTLFIFTMMPIAL) threads the bilayer. Over 433 to 450 (LVRRYYVRQDTPRVHLIK) the chain is Cytoplasmic. A helical transmembrane segment spans residues 451-471 (LITCLLFVVVSSMGTSAYWGM). Over 472–477 (QRKGSW) the chain is Extracellular. The helical transmembrane segment at 478–498 (IGYTVTVPFWFLGTLGIVFFV) threads the bilayer. The Cytoplasmic portion of the chain corresponds to 499–505 (PQQRTPK). Residues 506 to 526 (VWGVPLVPWLPCLSIATNIFL) form a helical membrane-spanning segment. Topologically, residues 527–537 (MGSLGAMAFVR) are extracellular. Residues 538–558 (FGVCTLAMLLYYFLLGLHATF) traverse the membrane as a helical segment. Topologically, residues 559–569 (DMAHQQIVPRT) are cytoplasmic.

It belongs to the amino acid-polyamine-organocation (APC) superfamily. Cationic amino acid transporter (CAT) (TC 2.A.3.3) family. As to expression, expressed in roots, stems, flowers, seeds, and leaves. Mostly present in leaf rims and cotyledons of developing seedlings.

The protein resides in the cell membrane. Functionally, high-affinity permease involved in the transport of the cationic amino acids (e.g. arginine, and, to a lower extent, citrulline and glutamate). Transport mostly basic amino acids, and, to a lower extent neutral and acidic amino acids. The polypeptide is Cationic amino acid transporter 5 (CAT5) (Arabidopsis thaliana (Mouse-ear cress)).